Reading from the N-terminus, the 438-residue chain is Aspartate--tRNA(Asp) ligase (438 aa).

Residue Glu170 participates in L-aspartate binding. Positions 192–195 (QLYK) are aspartate. Arg214 provides a ligand contact to L-aspartate. ATP is bound by residues 214 to 216 (RAE), 222 to 224 (RHL), and Glu361. Residues Glu361 and Ser364 each contribute to the Mg(2+) site. L-aspartate contacts are provided by Ser364 and Arg368. 409 to 412 (GAER) is an ATP binding site.

It belongs to the class-II aminoacyl-tRNA synthetase family. Type 2 subfamily. As to quaternary structure, homodimer. It depends on Mg(2+) as a cofactor.

It is found in the cytoplasm. It catalyses the reaction tRNA(Asp) + L-aspartate + ATP = L-aspartyl-tRNA(Asp) + AMP + diphosphate. In terms of biological role, catalyzes the attachment of L-aspartate to tRNA(Asp) in a two-step reaction: L-aspartate is first activated by ATP to form Asp-AMP and then transferred to the acceptor end of tRNA(Asp). The polypeptide is Aspartate--tRNA(Asp) ligase (Pyrococcus furiosus (strain ATCC 43587 / DSM 3638 / JCM 8422 / Vc1)).